Reading from the N-terminus, the 1083-residue chain is MSSEREERTFRSSPVQQDDVRENISNENQEHPSPNPPSYASSMAESQTLLPKRPIIGGQTAKLQNKNRTSVHVAFADLPRDLPEIPDGISDRRRVHKEQQHLGLDTTPPVPPRPLSRLRDVNSHDKLPSIRSPRNLNYQPSVRSSRSGSIFDDAPSMAPPGGSYVSYGMHDDGSPQRPWTPSSRVSGFTRSDLSRPPPSDGMYEPSDLNGSPRPGTPSSRYGGSPRRPLPPAPLFSNSRQPVPPIADDATISIPLHDTYDDDVFAPESDLSDARPHPVDRSSYMSSESQDTLNEGDMEDYDKVEHYGPAPTGAQERRGVRAPQMSRKEVQLINGELVLECKIPTILYSFLPRRGEVEFTHMRYTAVTCDPDDFVERGYTLRQTFGKTVRETELFICVTMYNEDEIGFTRTMHAVMKNISHFCSRSRSRTWGETGWQKIVVCIVSDGREKIHPRTLDALAAMGVYQHGIAKNFVNNRAVQAHVYEYTTQVSLDSDLKFKGAEKGIVPCQMIFCLKEKNQRKLNSHRWFFNAFGKALNPNVCILLDVGTRPSGTSLYHLWKAFDTDSNVAGACGEIKAMKGRLGANLLNPLVASQNFEYKMSNILDKPLESVFGYITVLPGALSAYRYHALQNDETGHGPLSQYFKGETLHGQHADVFTANMYLAEDRILCWELVAKRGERWVLKYVKGCTGETDVPDTVPEFISQRRRWLNGAFFAAVYSLVHFKQIWFTDHTLARKILLHMEFLYQFIQLMFTFFSLANFYLTFYFVAGGLTDPKVDPFGHNIATVIFHILRYACVLLISTQFILSLGNRPQGSKKLYLISMIIYSIIMVYTTFATFYIIIHQLTSKDDKIEMGDNVFTNMIVSILSTIGMYFIMSILYLDPWHMITSSAQYFILLPSYICTLQVYAFCNTHDVTWGTKGDNVMKTDLGGAVGKGETVELEMPSEQLDIDSGYDEALRNLRDRLEVPESPPSESQLQEDYYKSVRTYLVLTWMIGNGILGMAVSEIYSARGIGDNYYLRFLLWSVAALAVFRAIGSTTFAVLNVINMIVEGRVRLSLKAPRWMGGLKERVNDKMSSVSSNLRS.

2 stretches are compositionally biased toward basic and acidic residues: residues 1–10 (MSSEREERTF) and 18–30 (DDVR…ENQE). 2 disordered regions span residues 1–248 (MSSE…IADD) and 260–294 (DDDV…TLNE). Asparagine 23 carries an N-linked (GlcNAc...) asparagine glycan. Polar residues-rich tracts occupy residues 38–49 (SYASSMAESQTL) and 61–70 (AKLQNKNRTS). N-linked (GlcNAc...) asparagine glycosylation is present at asparagine 67. Composition is skewed to basic and acidic residues over residues 78 to 100 (LPRD…KEQQ) and 117 to 128 (RLRDVNSHDKLP). Polar residues-rich tracts occupy residues 132–148 (SPRN…SRSG), 177–191 (RPWT…FTRS), and 282–292 (SYMSSESQDTL). Asparagine 417 carries an N-linked (GlcNAc...) asparagine glycan. 8 helical membrane-spanning segments follow: residues 708-728 (WLNG…QIWF), 747-767 (FIQL…FYFV), 785-805 (TVIF…QFIL), 820-840 (ISMI…FYII), 860-880 (NMIV…ILYL), 889-909 (SAQY…YAFC), 987-1007 (YLVL…SEIY), and 1020-1040 (FLLW…TTFA).

This sequence belongs to the chitin synthase family. Class II subfamily.

It is found in the cell membrane. The catalysed reaction is [(1-&gt;4)-N-acetyl-beta-D-glucosaminyl](n) + UDP-N-acetyl-alpha-D-glucosamine = [(1-&gt;4)-N-acetyl-beta-D-glucosaminyl](n+1) + UDP + H(+). Its function is as follows. Polymerizes chitin, a structural polymer of the cell wall and septum, by transferring the sugar moiety of UDP-GlcNAc to the non-reducing end of the growing chitin polymer. Plays a critical role in cell wall integrity and virulence. This Fusarium oxysporum f. sp. lycopersici (strain 4287 / CBS 123668 / FGSC 9935 / NRRL 34936) (Fusarium vascular wilt of tomato) protein is Chitin synthase 2.